Here is a 306-residue protein sequence, read N- to C-terminus: Palmitoyl-protein thioesterase 1 (306 aa).

An N-terminal signal peptide occupies residues 1–27 (MASSCSRRLLAAALLPWCCAAWALGHL). 3 disulfides stabilise this stretch: Cys-45-Cys-46, Cys-96-Cys-128, and Cys-152-Cys-160. Ser-115 is an active-site residue. N-linked (GlcNAc...) asparagine glycans are attached at residues Asn-197, Asn-212, and Asn-232. Catalysis depends on residues Asp-233 and His-289.

The protein belongs to the palmitoyl-protein thioesterase family. Interacts with CLN5, ATP5F1A and ATP5F1B. Post-translationally, glycosylated. In terms of tissue distribution, highest level in testis and kidney, lower in heart, brain and lung and lowest in skeletal muscle.

Its subcellular location is the lysosome. The protein resides in the secreted. It localises to the golgi apparatus. It is found in the endoplasmic reticulum. It catalyses the reaction S-hexadecanoyl-L-cysteinyl-[protein] + H2O = L-cysteinyl-[protein] + hexadecanoate + H(+). The enzyme catalyses hexadecanoyl-CoA + H2O = hexadecanoate + CoA + H(+). It carries out the reaction S-hexadecanoyl-N-acetylcysteamine + H2O = N-acetylcysteamine + hexadecanoate + H(+). The catalysed reaction is S-hexadecanoyl-N-acetylcysteine methyl ester + H2O = N-acetylcysteine methyl ester + hexadecanoate + H(+). Functionally, has thioesterase activity against fatty acid thioesters with 14 -18 carbons, including palmitoyl-CoA, S-palmitoyl-N-acetylcysteamine, and palmitoylated proteins. In contrast to PPT2, PPT1 can hydrolyze palmitoylated proteins and palmitoylcysteine. The protein is Palmitoyl-protein thioesterase 1 (Ppt1) of Mus musculus (Mouse).